Here is a 516-residue protein sequence, read N- to C-terminus: 4-hydroxybenzoate brominase (decarboxylating) (516 aa).

Residues S13, E32, V40, F41, H51, V102, and Q365 each coordinate FAD.

This sequence belongs to the FMO family. FAD is required as a cofactor.

It carries out the reaction 2 bromide + 4-hydroxybenzoate + 2 NADPH + 2 O2 + 5 H(+) = 2,4-dibromophenol + CO2 + 2 NADP(+) + 4 H2O. It catalyses the reaction bromide + 4-hydroxybenzoate + NADPH + O2 + 2 H(+) = 3-bromo-4-hydroxybenzoate + NADP(+) + 2 H2O. The enzyme catalyses 3-bromo-4-hydroxybenzoate + bromide + NADPH + O2 + 3 H(+) = 2,4-dibromophenol + CO2 + NADP(+) + 2 H2O. The catalysed reaction is 3,4-dihydroxybenzoate + 2 bromide + 2 NADPH + 2 O2 + 5 H(+) = 3,5-dibromobenzene-1,2-diol + CO2 + 2 NADP(+) + 4 H2O. It carries out the reaction 3,4-dihydroxybenzoate + bromide + NADPH + O2 + 2 H(+) = 3-bromo-4,5-dihydroxybenzoate + NADP(+) + 2 H2O. It catalyses the reaction 3-bromo-4,5-dihydroxybenzoate + bromide + NADPH + O2 + 3 H(+) = 3,5-dibromobenzene-1,2-diol + CO2 + NADP(+) + 2 H2O. Brominase involved in the biosynthesis of polybrominated aromatic organic compounds. Catalyzes the bromination of 4-hydroxybenzoate (4-HBA) to 3-bromo-4-hydroxybenzoate, followed by bromination and decarboxylation of 3-bromo-4-hydroxybenzoate to 2,4-dibromophenol. Can also use 3,4-dihydroxybenzoate, with lower efficiency, forming 3-bromo-4,5-dihydroxybenzoate and 3,5-dibromobenzene-1,2-diol. This is 4-hydroxybenzoate brominase (decarboxylating) from Marinomonas mediterranea (strain ATCC 700492 / JCM 21426 / NBRC 103028 / MMB-1).